The primary structure comprises 367 residues: Histidinol-phosphate aminotransferase (367 aa).

Lys-226 bears the N6-(pyridoxal phosphate)lysine mark.

Belongs to the class-II pyridoxal-phosphate-dependent aminotransferase family. Histidinol-phosphate aminotransferase subfamily. Homodimer. Requires pyridoxal 5'-phosphate as cofactor.

The catalysed reaction is L-histidinol phosphate + 2-oxoglutarate = 3-(imidazol-4-yl)-2-oxopropyl phosphate + L-glutamate. Its pathway is amino-acid biosynthesis; L-histidine biosynthesis; L-histidine from 5-phospho-alpha-D-ribose 1-diphosphate: step 7/9. This chain is Histidinol-phosphate aminotransferase, found in Wolinella succinogenes (strain ATCC 29543 / DSM 1740 / CCUG 13145 / JCM 31913 / LMG 7466 / NCTC 11488 / FDC 602W) (Vibrio succinogenes).